Here is a 35-residue protein sequence, read N- to C-terminus: Putative gastric cancer-related gene 224 protein (35 aa).

In terms of tissue distribution, expressed in gastric mucosa.

The chain is Putative gastric cancer-related gene 224 protein (GCRG224) from Homo sapiens (Human).